The sequence spans 157 residues: MTKKPDPASRIADNKKAAHDYFLEERYEAGMVLHGWEVKALRAGKAQLTDGYVLIRDGELFLLGCQLQALKTASTHVSPEAARTKKLLLKKDDIRRLIGKVEQKGYTLVPLNLHWKNGVVKCEIALARGKAQHDKRNSIKEREGKREVERALKSRSR.

A disordered region spans residues 133 to 157 (HDKRNSIKEREGKREVERALKSRSR).

Belongs to the SmpB family.

Its subcellular location is the cytoplasm. Functionally, required for rescue of stalled ribosomes mediated by trans-translation. Binds to transfer-messenger RNA (tmRNA), required for stable association of tmRNA with ribosomes. tmRNA and SmpB together mimic tRNA shape, replacing the anticodon stem-loop with SmpB. tmRNA is encoded by the ssrA gene; the 2 termini fold to resemble tRNA(Ala) and it encodes a 'tag peptide', a short internal open reading frame. During trans-translation Ala-aminoacylated tmRNA acts like a tRNA, entering the A-site of stalled ribosomes, displacing the stalled mRNA. The ribosome then switches to translate the ORF on the tmRNA; the nascent peptide is terminated with the 'tag peptide' encoded by the tmRNA and targeted for degradation. The ribosome is freed to recommence translation, which seems to be the essential function of trans-translation. This chain is SsrA-binding protein, found in Verminephrobacter eiseniae (strain EF01-2).